The primary structure comprises 159 residues: NAD(P)H-quinone oxidoreductase subunit J, chloroplastic (159 aa).

Belongs to the complex I 30 kDa subunit family. As to quaternary structure, NDH is composed of at least 16 different subunits, 5 of which are encoded in the nucleus.

The protein localises to the plastid. The protein resides in the chloroplast thylakoid membrane. The enzyme catalyses a plastoquinone + NADH + (n+1) H(+)(in) = a plastoquinol + NAD(+) + n H(+)(out). It catalyses the reaction a plastoquinone + NADPH + (n+1) H(+)(in) = a plastoquinol + NADP(+) + n H(+)(out). Functionally, NDH shuttles electrons from NAD(P)H:plastoquinone, via FMN and iron-sulfur (Fe-S) centers, to quinones in the photosynthetic chain and possibly in a chloroplast respiratory chain. The immediate electron acceptor for the enzyme in this species is believed to be plastoquinone. Couples the redox reaction to proton translocation, and thus conserves the redox energy in a proton gradient. In Agrostis stolonifera (Creeping bentgrass), this protein is NAD(P)H-quinone oxidoreductase subunit J, chloroplastic.